Consider the following 393-residue polypeptide: Seven-bladed beta-propeller protein Rv1057 (393 aa).

The segment at 208 to 230 (DGGRIGSRSRSRQKSSKPRGNQA) is disordered. The segment covering 214 to 224 (SRSRSRQKSSK) has biased composition (basic residues).

May play an important role in host-pathogen interactions and in ESAT-6 secretion. This Mycobacterium tuberculosis (strain ATCC 25618 / H37Rv) protein is Seven-bladed beta-propeller protein Rv1057.